The primary structure comprises 564 residues: CTP synthase (564 aa).

Positions 1–272 (MARPKNVKHI…DIRVLKKLGL (272 aa)) are amidoligase domain. Residue Ser-18 participates in CTP binding. Position 18 (Ser-18) interacts with UTP. Position 19-24 (19-24 (SLGKGI)) interacts with ATP. Tyr-59 serves as a coordination point for L-glutamine. Asp-76 provides a ligand contact to ATP. Asp-76 and Glu-146 together coordinate Mg(2+). CTP is bound by residues 153-155 (DIE), 193-198 (KTKPTQ), and Lys-229. UTP contacts are provided by residues 193-198 (KTKPTQ) and Lys-229. The 245-residue stretch at 299–543 (TIAICGKYTE…VAAAKEFAHG (245 aa)) folds into the Glutamine amidotransferase type-1 domain. L-glutamine is bound at residue Gly-363. Cys-390 functions as the Nucleophile; for glutamine hydrolysis in the catalytic mechanism. L-glutamine contacts are provided by residues 391–394 (LGMQ), Glu-414, and Arg-471. Active-site residues include His-516 and Glu-518.

It belongs to the CTP synthase family. In terms of assembly, homotetramer.

The catalysed reaction is UTP + L-glutamine + ATP + H2O = CTP + L-glutamate + ADP + phosphate + 2 H(+). The enzyme catalyses L-glutamine + H2O = L-glutamate + NH4(+). It carries out the reaction UTP + NH4(+) + ATP = CTP + ADP + phosphate + 2 H(+). It participates in pyrimidine metabolism; CTP biosynthesis via de novo pathway; CTP from UDP: step 2/2. Allosterically activated by GTP, when glutamine is the substrate; GTP has no effect on the reaction when ammonia is the substrate. The allosteric effector GTP functions by stabilizing the protein conformation that binds the tetrahedral intermediate(s) formed during glutamine hydrolysis. Inhibited by the product CTP, via allosteric rather than competitive inhibition. In terms of biological role, catalyzes the ATP-dependent amination of UTP to CTP with either L-glutamine or ammonia as the source of nitrogen. Regulates intracellular CTP levels through interactions with the four ribonucleotide triphosphates. The protein is CTP synthase of Prosthecochloris aestuarii (strain DSM 271 / SK 413).